A 278-amino-acid chain; its full sequence is Mediator of RNA polymerase II transcription subunit 18 (278 aa).

It belongs to the Mediator complex subunit 18 family. Component of the Mediator complex.

The protein localises to the nucleus. Its function is as follows. Component of the Mediator complex, a coactivator involved in the regulated transcription of nearly all RNA polymerase II-dependent genes. Mediator functions as a bridge to convey information from gene-specific regulatory proteins to the basal RNA polymerase II transcription machinery. Mediator is recruited to promoters by direct interactions with regulatory proteins and serves as a scaffold for the assembly of a functional preinitiation complex with RNA polymerase II and the general transcription factors. The protein is Mediator of RNA polymerase II transcription subunit 18 (srb5) of Aspergillus clavatus (strain ATCC 1007 / CBS 513.65 / DSM 816 / NCTC 3887 / NRRL 1 / QM 1276 / 107).